The following is a 475-amino-acid chain: Aspartyl/glutamyl-tRNA(Asn/Gln) amidotransferase subunit B (475 aa).

The protein belongs to the GatB/GatE family. GatB subfamily. As to quaternary structure, heterotrimer of A, B and C subunits.

It carries out the reaction L-glutamyl-tRNA(Gln) + L-glutamine + ATP + H2O = L-glutaminyl-tRNA(Gln) + L-glutamate + ADP + phosphate + H(+). It catalyses the reaction L-aspartyl-tRNA(Asn) + L-glutamine + ATP + H2O = L-asparaginyl-tRNA(Asn) + L-glutamate + ADP + phosphate + 2 H(+). In terms of biological role, allows the formation of correctly charged Asn-tRNA(Asn) or Gln-tRNA(Gln) through the transamidation of misacylated Asp-tRNA(Asn) or Glu-tRNA(Gln) in organisms which lack either or both of asparaginyl-tRNA or glutaminyl-tRNA synthetases. The reaction takes place in the presence of glutamine and ATP through an activated phospho-Asp-tRNA(Asn) or phospho-Glu-tRNA(Gln). The polypeptide is Aspartyl/glutamyl-tRNA(Asn/Gln) amidotransferase subunit B (Bacillus cereus (strain B4264)).